We begin with the raw amino-acid sequence, 248 residues long: Probable transcriptional regulator LumQ (248 aa).

The 99-residue stretch at 148–246 (VLIDNYIEQH…GMSPTRYQFF (99 aa)) folds into the HTH araC/xylS-type domain. DNA-binding regions (H-T-H motif) lie at residues 165 to 186 (AELSSVAFLAQSQFYALFKSQM) and 213 to 236 (LSQVAQLCGFSSQSSFSQAFRRLY).

Its function is as follows. Probable transcriptional regulator. Its target gene(s) is not yet known. The sequence is that of Probable transcriptional regulator LumQ (lumQ) from Photobacterium leiognathi.